A 201-amino-acid chain; its full sequence is NADH-quinone oxidoreductase subunit B 1 (201 aa).

[4Fe-4S] cluster-binding residues include Cys-80, Cys-81, Cys-145, and Cys-175.

This sequence belongs to the complex I 20 kDa subunit family. As to quaternary structure, NDH-1 is composed of 14 different subunits. Subunits NuoB, C, D, E, F, and G constitute the peripheral sector of the complex. It depends on [4Fe-4S] cluster as a cofactor.

The protein resides in the cell inner membrane. It carries out the reaction a quinone + NADH + 5 H(+)(in) = a quinol + NAD(+) + 4 H(+)(out). NDH-1 shuttles electrons from NADH, via FMN and iron-sulfur (Fe-S) centers, to quinones in the respiratory chain. The immediate electron acceptor for the enzyme in this species is believed to be ubiquinone. Couples the redox reaction to proton translocation (for every two electrons transferred, four hydrogen ions are translocated across the cytoplasmic membrane), and thus conserves the redox energy in a proton gradient. The chain is NADH-quinone oxidoreductase subunit B 1 from Rhodopseudomonas palustris (strain BisB18).